The primary structure comprises 297 residues: Glucose-6-phosphate 1-epimerase (297 aa).

Positions 57, 81, and 86 each coordinate substrate. The residue at position 88 (S88) is a Phosphoserine. H159 is an active-site residue. D203 serves as a coordination point for substrate. The active site involves E264.

This sequence belongs to the glucose-6-phosphate 1-epimerase family.

It catalyses the reaction alpha-D-glucose 6-phosphate = beta-D-glucose 6-phosphate. Catalyzes the interconversion between the alpha and beta anomers from at least three hexose 6-phosphate sugars (Glc6P, Gal6P, and Man6P). The chain is Glucose-6-phosphate 1-epimerase from Saccharomyces cerevisiae (strain ATCC 204508 / S288c) (Baker's yeast).